The sequence spans 422 residues: Protein phosphatase methylesterase 1 (422 aa).

Positions Met1–Ser27 are disordered. Active-site residues include Ser207, Asp234, and His371.

It belongs to the AB hydrolase superfamily.

It carries out the reaction [phosphatase 2A protein]-C-terminal L-leucine methyl ester + H2O = [phosphatase 2A protein]-C-terminal L-leucine + methanol + H(+). Its function is as follows. Demethylates proteins that have been reversibly carboxymethylated. Demethylates the phosphatase PP2A catalytic subunit. The sequence is that of Protein phosphatase methylesterase 1 (PPE1) from Cryptococcus neoformans var. neoformans serotype D (strain JEC21 / ATCC MYA-565) (Filobasidiella neoformans).